Consider the following 250-residue polypeptide: Triosephosphate isomerase (250 aa).

Substrate-binding residues include Asn-10 and Lys-12. His-94 serves as the catalytic Electrophile. Catalysis depends on Glu-167, which acts as the Proton acceptor.

This sequence belongs to the triosephosphate isomerase family. In terms of assembly, homodimer.

It is found in the cytoplasm. The catalysed reaction is D-glyceraldehyde 3-phosphate = dihydroxyacetone phosphate. The protein operates within carbohydrate biosynthesis; gluconeogenesis. It participates in carbohydrate degradation; glycolysis; D-glyceraldehyde 3-phosphate from glycerone phosphate: step 1/1. This is Triosephosphate isomerase from Taenia solium (Pork tapeworm).